Reading from the N-terminus, the 366-residue chain is uncharacterized protein (366 aa).

This is an uncharacterized protein from Amazona oratrix (yellow-headed parrot).